The chain runs to 457 residues: UDP-N-acetyl-alpha-D-muramoyl-L-alanyl-L-glutamate epimerase (457 aa).

It belongs to the MurL family.

The catalysed reaction is UDP-N-acetyl-alpha-D-muramoyl-L-alanyl-L-glutamate + ATP + H2O = UDP-N-acetyl-alpha-D-muramoyl-L-alanyl-D-glutamate + AMP + diphosphate + H(+). The protein operates within cell wall biogenesis; peptidoglycan biosynthesis. Cell wall formation. Catalyzes epimerization of the terminal L-glutamate in UDP-N-acetyl-alpha-D-muramoyl-L-alanyl-L-glutamate. The chain is UDP-N-acetyl-alpha-D-muramoyl-L-alanyl-L-glutamate epimerase from Salinispora tropica (strain ATCC BAA-916 / DSM 44818 / JCM 13857 / NBRC 105044 / CNB-440).